The chain runs to 207 residues: LexA repressor (207 aa).

The H-T-H motif DNA-binding region spans 28–48 (RAEIAQKLGFKSANAAEEHLK). Residues serine 124 and lysine 161 each act as for autocatalytic cleavage activity in the active site.

This sequence belongs to the peptidase S24 family. In terms of assembly, homodimer.

It catalyses the reaction Hydrolysis of Ala-|-Gly bond in repressor LexA.. In terms of biological role, represses a number of genes involved in the response to DNA damage (SOS response), including recA and lexA. In the presence of single-stranded DNA, RecA interacts with LexA causing an autocatalytic cleavage which disrupts the DNA-binding part of LexA, leading to derepression of the SOS regulon and eventually DNA repair. The protein is LexA repressor of Aeromonas hydrophila subsp. hydrophila (strain ATCC 7966 / DSM 30187 / BCRC 13018 / CCUG 14551 / JCM 1027 / KCTC 2358 / NCIMB 9240 / NCTC 8049).